Reading from the N-terminus, the 294-residue chain is Cytidine deaminase (294 aa).

2 consecutive CMP/dCMP-type deaminase domains span residues Asp48–Lys168 and Leu186–Gly294. Asn89–Glu91 provides a ligand contact to substrate. His102 provides a ligand contact to Zn(2+). Glu104 (proton donor) is an active-site residue. Residues Cys129 and Cys132 each coordinate Zn(2+).

This sequence belongs to the cytidine and deoxycytidylate deaminase family. Homodimer. Zn(2+) is required as a cofactor.

It catalyses the reaction cytidine + H2O + H(+) = uridine + NH4(+). The catalysed reaction is 2'-deoxycytidine + H2O + H(+) = 2'-deoxyuridine + NH4(+). Its function is as follows. This enzyme scavenges exogenous and endogenous cytidine and 2'-deoxycytidine for UMP synthesis. The sequence is that of Cytidine deaminase from Salmonella choleraesuis (strain SC-B67).